The chain runs to 1245 residues: Nidogen-1 (1245 aa).

An N-terminal signal peptide occupies residues 1–28; sequence MLDASGCSWAMWTWALLQLLLLVGPGGC. The NIDO domain occupies 106–268; the sequence is PFLADLDTTD…GVWVFEIGSP (163 aa). The N-linked (GlcNAc...) asparagine glycan is linked to Asn187. Sulfotyrosine occurs at positions 290 and 295. Thr299 is a glycosylation site (O-linked (GalNAc...) threonine). Positions 307–344 are disordered; sequence VATPSPSHSPRRGYPDPHNVPRILSPGYEATERPRGVP. Ser331 carries O-linked (GalNAc...) serine glycosylation. Thr337 and Thr345 each carry an O-linked (GalNAc...) threonine glycan. Thr348 is a glycosylation site (O-linked (GalNAc...) threonine; partial). In terms of domain architecture, EGF-like 1 spans 384 to 424; sequence SQQTCANNRHQCSVHAECRDYATGFCCRCVANYTGNGRQCV. 19 disulfide bridges follow: Cys388-Cys401, Cys395-Cys410, Cys409-Cys616, Cys412-Cys423, Cys670-Cys683, Cys677-Cys693, Cys695-Cys706, Cys712-Cys725, Cys719-Cys734, Cys736-Cys748, Cys760-Cys775, Cys767-Cys785, Cys787-Cys798, Cys804-Cys815, Cys809-Cys824, Cys826-Cys837, Cys847-Cys876, Cys887-Cys894, and Cys896-Cys917. Asn415 carries N-linked (GlcNAc...) asparagine glycosylation. Residues 428-665 enclose the Nidogen G2 beta-barrel domain; sequence SPQRVNGKVK…GPVRDGSPDA (238 aa). Positions 666–707 constitute an EGF-like 2 domain; the sequence is LQNPCYIGTHGCDSNAACRPGPGTQFTCECSIGFRGDGQTCY. The Cell attachment site signature appears at 700 to 702; sequence RGD. In terms of domain architecture, EGF-like 3; calcium-binding spans 708-749; that stretch reads DIDECSEQPSRCGNHAVCNNLPGTFRCECVEGYHFSDRGTCV. Residues 756-799 enclose the EGF-like 4 domain; that stretch reads PINYCETGLHNCDIPQRAQCIYMGGSSYTCSCLPGFSGDGRACR. The 39-residue stretch at 800–838 folds into the EGF-like 5; calcium-binding domain; sequence DVDECQHSRCHPDAFCYNTPGSFTCQCKPGYQGDGFRCM. Positions 844–917 constitute a Thyroglobulin type-1 domain; that stretch reads KTRCQLEREH…RTPPGMRPPC (74 aa). Residues Thr920 and Thr933 are each glycosylated (O-linked (GalNAc...) threonine). LDL-receptor class B repeat units follow at residues 988 to 1030, 1031 to 1073, 1074 to 1118, and 1119 to 1160; these read KVVY…DHLG, RTIF…DPVR, GNLY…DAFS, and SQLC…YGKN. The 37-residue stretch at 1206–1242 folds into the EGF-like 6 domain; it reads GHNYCSVNNGGCTHLCLPTPGSRTCRCPDNTLGVDCI. Intrachain disulfides connect Cys1210/Cys1221, Cys1217/Cys1230, and Cys1232/Cys1241.

As to quaternary structure, interacts with FBLN1. Interacts with LGALS3BP. Interacts with PLXDC1. Interacts with SVEP1. In terms of processing, N- and O-glycosylated.

It is found in the secreted. Its subcellular location is the extracellular space. The protein resides in the extracellular matrix. It localises to the basement membrane. Functionally, sulfated glycoprotein widely distributed in basement membranes and tightly associated with laminin. Also binds to collagen IV and perlecan. It probably has a role in cell-extracellular matrix interactions. The chain is Nidogen-1 (Nid1) from Mus musculus (Mouse).